Reading from the N-terminus, the 97-residue chain is HssA/B-like protein 48 (97 aa).

Disordered regions lie at residues 1–20 (MTLF…SKSS) and 78–97 (GSGY…CCGI).

Belongs to the hssA/B family.

This is HssA/B-like protein 48 (hssl48) from Dictyostelium discoideum (Social amoeba).